A 313-amino-acid chain; its full sequence is Olfactory receptor 4M2 (313 aa).

At methionine 1–leucine 25 the chain is on the cytoplasmic side. Residues valine 26 to isoleucine 46 traverse the membrane as a helical segment. The Extracellular segment spans residues cysteine 47–serine 57. The helical transmembrane segment at proline 58–alanine 78 threads the bilayer. The Cytoplasmic segment spans residues proline 79–cysteine 97. The cysteines at positions 97 and 179 are disulfide-linked. A helical membrane pass occupies residues isoleucine 98–methionine 118. The Extracellular portion of the chain corresponds to alanine 119–cysteine 142. Residues isoleucine 143–isoleucine 163 traverse the membrane as a helical segment. The Cytoplasmic segment spans residues valine 164–glycine 204. The helical transmembrane segment at leucine 205–leucine 225 threads the bilayer. Over lysine 226–alanine 238 the chain is Extracellular. Residues valine 239–isoleucine 259 form a helical membrane-spanning segment. Residues tyrosine 260–aspartate 270 lie on the Cytoplasmic side of the membrane. The helical transmembrane segment at lysine 271 to leucine 291 threads the bilayer. The Extracellular segment spans residues arginine 292 to lysine 313.

Belongs to the G-protein coupled receptor 1 family.

The protein localises to the membrane. Its function is as follows. Odorant receptor. The protein is Olfactory receptor 4M2 of Homo sapiens (Human).